Here is a 460-residue protein sequence, read N- to C-terminus: ATP synthase subunit beta (460 aa).

Gly150–Thr157 is an ATP binding site.

It belongs to the ATPase alpha/beta chains family. F-type ATPases have 2 components, CF(1) - the catalytic core - and CF(0) - the membrane proton channel. CF(1) has five subunits: alpha(3), beta(3), gamma(1), delta(1), epsilon(1). CF(0) has three main subunits: a(1), b(2) and c(9-12). The alpha and beta chains form an alternating ring which encloses part of the gamma chain. CF(1) is attached to CF(0) by a central stalk formed by the gamma and epsilon chains, while a peripheral stalk is formed by the delta and b chains.

The protein localises to the cell inner membrane. The enzyme catalyses ATP + H2O + 4 H(+)(in) = ADP + phosphate + 5 H(+)(out). Functionally, produces ATP from ADP in the presence of a proton gradient across the membrane. The catalytic sites are hosted primarily by the beta subunits. This chain is ATP synthase subunit beta, found in Proteus mirabilis (strain HI4320).